A 316-amino-acid polypeptide reads, in one-letter code: Chorismate mutase 3, chloroplastic (316 aa).

A chloroplast-targeting transit peptide spans 1 to 47 (MEAKLLKPAFYNSPNLNLTNSSRLISRLSIWNDKSKVGLSSGSLFLR). L-phenylalanine is bound at residue Arg-62. The 255-residue stretch at 62–316 (RVDESEYLKL…QIEYLLRRLD (255 aa)) folds into the Chorismate mutase domain. L-tyrosine contacts are provided by residues Arg-133 and 194 to 197 (NCGS). 194–197 (NCGS) is an L-phenylalanine binding site.

As to quaternary structure, homodimer. As to expression, expressed in roots, stems, cauline leaves, flowers and siliques, and at lower levels in rosette leaves.

It is found in the plastid. The protein resides in the chloroplast. It carries out the reaction chorismate = prephenate. The protein operates within metabolic intermediate biosynthesis; prephenate biosynthesis; prephenate from chorismate: step 1/1. Its activity is regulated as follows. Allosterically inhibited by tyrosine and phenylalanine. According to another report, seems not to be repressed by tyrosine and phenylalanine. Activated by tryptophan, cysteine and histidine. Functionally, may play a role in chloroplast biogenesis. This is Chorismate mutase 3, chloroplastic from Arabidopsis thaliana (Mouse-ear cress).